The primary structure comprises 379 residues: Probable 3-phenylpropionic acid transporter (379 aa).

Topologically, residues 1-4 (MVLQ) are cytoplasmic. A helical membrane pass occupies residues 5–31 (STRWLALGYFTYFFSYGIFLPFWSVWL). The Periplasmic portion of the chain corresponds to 32-37 (KGIGLT). Residues 38–66 (PETIGLLLGAGLVARFLGSLLIAPRVSDP) traverse the membrane as a helical segment. Residues 67–70 (SRLI) lie on the Cytoplasmic side of the membrane. Residues 71-96 (SALRVLALLTLLFAVAFWAGAHVAWL) form a helical membrane-spanning segment. At 97 to 100 (MLVM) the chain is on the periplasmic side. Residues 101 to 118 (IGFNLFFSPLVPLTDALA) form a helical membrane-spanning segment. The Cytoplasmic segment spans residues 119 to 129 (NTWQKQFPLDY). Residues 130 to 152 (GKVRLWGSVAFVIGSALTGKLVT) form a helical membrane-spanning segment. Over 153–155 (MFD) the chain is Periplasmic. The helical transmembrane segment at 156-175 (YRVILALLTLGVASMLLGFL) threads the bilayer. Residues 176 to 207 (IRPTIQPQGASRQQESTGWSAWLALVRQNWRF) lie on the Cytoplasmic side of the membrane. Residues 208–227 (LACVCLLQGAHAAYYGFSAI) traverse the membrane as a helical segment. Residues 228-231 (YWQA) are Periplasmic-facing. A helical membrane pass occupies residues 232 to 256 (AGYSASAVGYLWSLGVVAEVIIFAL). Residues 257 to 266 (SNKLFRRCSA) lie on the Cytoplasmic side of the membrane. A helical transmembrane segment spans residues 267–286 (RDMLLISAICGVVRWGIMGA). The Periplasmic segment spans residues 287 to 289 (TTA). The chain crosses the membrane as a helical span at residues 290–312 (LPWLIVVQILHCGTFTVCHLAAM). The Cytoplasmic segment spans residues 313–323 (RYIAARQGSEV). A helical membrane pass occupies residues 324 to 351 (IRLQAVYSAVAMGGSIAIMTVFAGFLYQ). Residues 352–354 (YLG) are Periplasmic-facing. Residues 355–375 (HGVFWVMALVALPAMFLRPKV) traverse the membrane as a helical segment. The Cytoplasmic portion of the chain corresponds to 376–379 (VPSC).

This sequence belongs to the major facilitator superfamily. Phenyl propionate permease (PPP) (TC 2.A.1.27) family.

It localises to the cell inner membrane. Its function is as follows. Probable permease involved in the uptake of 3-phenylpropionic acid. In Escherichia coli (strain K12), this protein is Probable 3-phenylpropionic acid transporter (hcaT).